The following is a 252-amino-acid chain: uncharacterized protein (252 aa).

The protein belongs to the methyltransferase superfamily.

This is an uncharacterized protein from Mycobacterium sp. (strain JLS).